Here is a 453-residue protein sequence, read N- to C-terminus: MSPQTETKASVGFKAGVKEYKLTYYTPEYETKDTDILAAFRVTAQPGVPPEERGAAVAAESSTGTWTTVWTDGLTSLDRYKGRCYHIEPVPGEEEQFIAYVAYPLDLFEEGSVTNMFTSIVGNVFGFKALRALRLEDLRIPVAYVKTFQGPPHGIQVERDKLNKYGRPLLGCTIKPKLGLSAKNYGRAVYECLRGGLDFTKDDENVNSQPFMRWRDRFLFCAEAIYKSQAETGEIKGHYLNATAGTCEEMIKRAVFARELAVPIVMHDYITGGFTANTSLAHYCRDNGLLLHIHRAMHAVIDRQKNHGMHFRVLAKALRMSGGDHIHAGTVVGKLEGERDITLGFVDLLRDDYIEKDRSRGIYFTQDWVSLPGVLPVASRGIHVWHMPALTEIFGDDSVLQFGGGTLGHPWGNAPGAVANRVALEACVKARNEGRDLAVDGGDIIREACKWSP.

Positions 1-2 are excised as a propeptide; sequence MS. Proline 3 is subject to N-acetylproline. N6,N6,N6-trimethyllysine is present on lysine 14. Substrate contacts are provided by asparagine 123 and threonine 173. The active-site Proton acceptor is lysine 175. A substrate-binding site is contributed by lysine 177. Mg(2+)-binding residues include lysine 201, aspartate 203, and glutamate 204. Lysine 201 carries the post-translational modification N6-carboxylysine. Histidine 294 acts as the Proton acceptor in catalysis. Positions 295, 327, and 379 each coordinate substrate.

This sequence belongs to the RuBisCO large chain family. Type I subfamily. In terms of assembly, heterohexadecamer of 8 large chains and 8 small chains; disulfide-linked. The disulfide link is formed within the large subunit homodimers. Mg(2+) serves as cofactor. The disulfide bond which can form in the large chain dimeric partners within the hexadecamer appears to be associated with oxidative stress and protein turnover.

It is found in the plastid. The protein resides in the chloroplast. It carries out the reaction 2 (2R)-3-phosphoglycerate + 2 H(+) = D-ribulose 1,5-bisphosphate + CO2 + H2O. The catalysed reaction is D-ribulose 1,5-bisphosphate + O2 = 2-phosphoglycolate + (2R)-3-phosphoglycerate + 2 H(+). RuBisCO catalyzes two reactions: the carboxylation of D-ribulose 1,5-bisphosphate, the primary event in carbon dioxide fixation, as well as the oxidative fragmentation of the pentose substrate in the photorespiration process. Both reactions occur simultaneously and in competition at the same active site. The chain is Ribulose bisphosphate carboxylase large chain from Rubia tinctorum (Madder).